The following is a 395-amino-acid chain: NAD(P)H-quinone oxidoreductase subunit H, chloroplastic (395 aa).

Belongs to the complex I 49 kDa subunit family. As to quaternary structure, NDH is composed of at least 16 different subunits, 5 of which are encoded in the nucleus.

The protein resides in the plastid. It localises to the chloroplast thylakoid membrane. It carries out the reaction a plastoquinone + NADH + (n+1) H(+)(in) = a plastoquinol + NAD(+) + n H(+)(out). The enzyme catalyses a plastoquinone + NADPH + (n+1) H(+)(in) = a plastoquinol + NADP(+) + n H(+)(out). NDH shuttles electrons from NAD(P)H:plastoquinone, via FMN and iron-sulfur (Fe-S) centers, to quinones in the photosynthetic chain and possibly in a chloroplast respiratory chain. The immediate electron acceptor for the enzyme in this species is believed to be plastoquinone. Couples the redox reaction to proton translocation, and thus conserves the redox energy in a proton gradient. In Chloranthus spicatus (Chulantree), this protein is NAD(P)H-quinone oxidoreductase subunit H, chloroplastic.